Here is a 167-residue protein sequence, read N- to C-terminus: Bacterial non-heme ferritin (167 aa).

The region spanning 2–145 (LNKELLDALN…THIDYLNRIG (144 aa)) is the Ferritin-like diiron domain. Fe cation is bound by residues Glu17, Glu50, His53, Glu94, and Gln127.

The protein belongs to the ferritin family. Prokaryotic subfamily.

It localises to the cytoplasm. It catalyses the reaction 4 Fe(2+) + O2 + 6 H2O = 4 iron(III) oxide-hydroxide + 12 H(+). Iron-storage protein. This Staphylococcus saprophyticus subsp. saprophyticus (strain ATCC 15305 / DSM 20229 / NCIMB 8711 / NCTC 7292 / S-41) protein is Bacterial non-heme ferritin (ftnA).